The following is a 126-amino-acid chain: Protein ApaG (126 aa).

Residues 2–126 (SDPRYQVDVS…FRLAVPGALH (125 aa)) enclose the ApaG domain.

The polypeptide is Protein ApaG (Pseudomonas fluorescens (strain ATCC BAA-477 / NRRL B-23932 / Pf-5)).